A 76-amino-acid polypeptide reads, in one-letter code: Adipogenesis regulatory factor (76 aa).

As to expression, expressed in adipose tissue (at protein level). Highly expressed in omental and subcutaneous adipose tissues. Expressed in heart, cornea, liver, kidney and spleen.

The protein localises to the nucleus. Plays a role in fat cell development; promotes adipogenic differentiation and stimulates transcription initiation of master adipogenesis factors like PPARG and CEBPA at early stages of preadipocyte differentiation. Its overexpression confers resistance to the anticancer chemotherapeutic drug cisplatin. The chain is Adipogenesis regulatory factor (ADIRF) from Homo sapiens (Human).